The following is a 492-amino-acid chain: Protein GvpD2 (492 aa).

39 to 46 (GAPGTGKT) contacts ATP. Over residues 355–368 (RDHDDAVDPDRLPG) the composition is skewed to basic and acidic residues. Residues 355–379 (RDHDDAVDPDRLPGHDTTPTEHGTL) are disordered.

It belongs to the gas vesicle GvpD family. Homodimer. Interacts with GvpE, also with GvpE from H.mediterranei.

Its subcellular location is the cytoplasm. Causes a decrease in the amount of GvpE protein. Gas vesicles are hollow, gas filled proteinaceous nanostructures found in several microbial planktonic microorganisms. They allow positioning of halobacteria at the optimal depth for growth in the poorly aerated, shallow brine pools of their habitat. Its function is as follows. Expression of 2 c-vac DNA fragments containing 2 divergently transcribed regions (gvpE-gvpF-gvpG-gvpH-gvpI-gvpJ-gvpK-gvpL-gvpM and gvpA-gvpC-gvpN-gvpO) allows H.volcanii to produce gas vesicles. This is Protein GvpD2 from Halobacterium salinarum (strain ATCC 700922 / JCM 11081 / NRC-1) (Halobacterium halobium).